The chain runs to 518 residues: Glutamate--cysteine ligase (518 aa).

This sequence belongs to the glutamate--cysteine ligase type 1 family. Type 1 subfamily.

The catalysed reaction is L-cysteine + L-glutamate + ATP = gamma-L-glutamyl-L-cysteine + ADP + phosphate + H(+). It participates in sulfur metabolism; glutathione biosynthesis; glutathione from L-cysteine and L-glutamate: step 1/2. In Citrobacter koseri (strain ATCC BAA-895 / CDC 4225-83 / SGSC4696), this protein is Glutamate--cysteine ligase.